The sequence spans 766 residues: 5-methyltetrahydropteroyltriglutamate--homocysteine methyltransferase (766 aa).

5-methyltetrahydropteroyltri-L-glutamate contacts are provided by residues 16-19 and Lys119; that span reads RELK. L-homocysteine is bound by residues 440–442 and Glu493; that span reads IGS. L-methionine is bound by residues 440–442 and Glu493; that span reads IGS. 5-methyltetrahydropteroyltri-L-glutamate is bound by residues 524–525 and Trp570; that span reads RC. Residue Asp608 participates in L-homocysteine binding. Asp608 is a binding site for L-methionine. Glu614 contacts 5-methyltetrahydropteroyltri-L-glutamate. Zn(2+) is bound by residues His650, Cys652, and Glu674. The active-site Proton donor is the His703. Cys735 lines the Zn(2+) pocket.

The protein belongs to the vitamin-B12 independent methionine synthase family. The cofactor is Zn(2+).

The catalysed reaction is 5-methyltetrahydropteroyltri-L-glutamate + L-homocysteine = tetrahydropteroyltri-L-glutamate + L-methionine. The protein operates within amino-acid biosynthesis; L-methionine biosynthesis via de novo pathway; L-methionine from L-homocysteine (MetE route): step 1/1. In terms of biological role, catalyzes the transfer of a methyl group from 5-methyltetrahydrofolate to homocysteine resulting in methionine formation. The polypeptide is 5-methyltetrahydropteroyltriglutamate--homocysteine methyltransferase (Pseudomonas aeruginosa (strain LESB58)).